A 175-amino-acid polypeptide reads, in one-letter code: Cell number regulator 9 (175 aa).

A run of 2 helical transmembrane segments spans residues 53 to 73 (GLCCLTCWCPCITFGRIAEIV) and 80 to 100 (CGVAGTIYTLLACFTGCHWIY).

It belongs to the cornifelin family. In terms of tissue distribution, expressed in roots, coleoptiles, leaves and stalks.

The protein localises to the membrane. The sequence is that of Cell number regulator 9 (CNR9) from Zea mays (Maize).